A 253-amino-acid polypeptide reads, in one-letter code: Ribosomal RNA small subunit methyltransferase J (253 aa).

S-adenosyl-L-methionine is bound by residues 123 to 124 (ER) and Asp176.

The protein belongs to the methyltransferase superfamily. RsmJ family.

It is found in the cytoplasm. It carries out the reaction guanosine(1516) in 16S rRNA + S-adenosyl-L-methionine = N(2)-methylguanosine(1516) in 16S rRNA + S-adenosyl-L-homocysteine + H(+). In terms of biological role, specifically methylates the guanosine in position 1516 of 16S rRNA. This is Ribosomal RNA small subunit methyltransferase J from Magnetococcus marinus (strain ATCC BAA-1437 / JCM 17883 / MC-1).